The primary structure comprises 508 residues: UTP--glucose-1-phosphate uridylyltransferase (508 aa).

S2 carries the post-translational modification Blocked amino end (Ser). Phosphoserine is present on S13. UTP-binding positions include 113–116, K127, Q190, and G222; that span reads LNGG. Residue 115–116 coordinates substrate; sequence GG. A Mg(2+)-binding site is contributed by K127. Residues H223 and 251–253 each bind substrate; that span reads NID. The UTP site is built by D253 and K396. D253 provides a ligand contact to Mg(2+). The active site involves K396. A Phosphothreonine modification is found at T426. The residue at position 434 (S434) is a Phosphoserine. K438 carries the post-translational modification N6-acetyllysine. Phosphoserine is present on residues S448 and S461. The oligomerization stretch occupies residues 457–508; it reads HLTVSGDVTFGKNVSLKGTVIIIANHGDRIDIPPGAVLENKIVSGNLRILDH. The critical for end-to-end subunit interaction stretch occupies residues 502-503; it reads NL.

Belongs to the UDPGP type 1 family. In terms of assembly, homooctamer.

It is found in the cytoplasm. The enzyme catalyses alpha-D-glucose 1-phosphate + UTP + H(+) = UDP-alpha-D-glucose + diphosphate. It functions in the pathway glycan biosynthesis; glycogen biosynthesis. UTP--glucose-1-phosphate uridylyltransferase catalyzing the conversion of glucose-1-phosphate into UDP-glucose, a crucial precursor for the production of glycogen. This Bos taurus (Bovine) protein is UTP--glucose-1-phosphate uridylyltransferase (UGP2).